Consider the following 829-residue polypeptide: 1,4-alpha-glucan branching enzyme GlgB (829 aa).

Asp405 (nucleophile) is an active-site residue. Residue Glu458 is the Proton donor of the active site. The segment at 758-829 is disordered; the sequence is ASKATKVSTK…TTAKKTKDNA (72 aa). 2 stretches are compositionally biased toward low complexity: residues 778–789 and 810–820; these read VKAATKSSVTKV and VTKTAKASAKT.

The protein belongs to the glycosyl hydrolase 13 family. GlgB subfamily. Monomer.

The enzyme catalyses Transfers a segment of a (1-&gt;4)-alpha-D-glucan chain to a primary hydroxy group in a similar glucan chain.. It functions in the pathway glycan biosynthesis; glycogen biosynthesis. Catalyzes the formation of the alpha-1,6-glucosidic linkages in glycogen by scission of a 1,4-alpha-linked oligosaccharide from growing alpha-1,4-glucan chains and the subsequent attachment of the oligosaccharide to the alpha-1,6 position. The polypeptide is 1,4-alpha-glucan branching enzyme GlgB (Actinobacillus succinogenes (strain ATCC 55618 / DSM 22257 / CCUG 43843 / 130Z)).